Reading from the N-terminus, the 115-residue chain is Replication initiation control protein YabA (115 aa).

Residues His86, Cys88, Cys102, and Cys105 each coordinate Zn(2+).

Belongs to the YabA family. Homotetramer. Interacts with both DnaA and DnaN, acting as a bridge between these two proteins. The cofactor is Zn(2+).

The protein resides in the cytoplasm. It localises to the nucleoid. Its function is as follows. Involved in control of chromosome replication initiation. Inhibits the cooperative binding of DnaA to the oriC region, thus negatively regulating initiation of chromosome replication. Inhibits the ability of DnaA-ATP to form a helix on DNA; does not disassemble preformed DnaA-DNA helices. Decreases the residence time of DnaA on the chromosome at its binding sites (oriC, replication forks and promoter-binding sites). Tethers DnaA to the replication machinery via the DNA polymerase beta sliding clamp subunit (dnaN). Associates with oriC and other DnaA targets on the chromosome in a DnaA-dependent manner. This is Replication initiation control protein YabA from Enterococcus faecalis (strain ATCC 700802 / V583).